The sequence spans 400 residues: MVIERIKHLASPLQDWVFTPSPKVMFDRQLIWIALGLMLTGLVMVASASFPISTRLTGQPFHFMMRHMLFVFLALSISSIVLRIELNKWLKYSSHLLLISLLLLAAVLVVGKSVNGAARWLPLGIFNLQPAEVAKLSLFVFIAGYLVRRHGEVRDSFRGFVKPLLVLITLAFFLLMQPDLGTTVVMFVTTIAMLFIAGAKLWQFIALVMGGISLVIVLILAEPYRMRRVTSFLDPWQDPFGSGYQLTQSLMAFGRGSWFGEGLGNSIQKLEYLPEAHTDFVFAVIAEELGFVGVCLVLCLIFALVFKALLIGRKCLAHDQRFGGFLAFGIGIWFAFQTLVNVGAAAGIVPTKGLTLPLISYGGSSLIIMSVAVSLLIRIDHECRVYLANEPPRSENEEQK.

Topologically, residues 1–29 (MVIERIKHLASPLQDWVFTPSPKVMFDRQ) are cytoplasmic. A helical transmembrane segment spans residues 30–50 (LIWIALGLMLTGLVMVASASF). The Periplasmic segment spans residues 51-60 (PISTRLTGQP). Residues 61–81 (FHFMMRHMLFVFLALSISSIV) traverse the membrane as a helical segment. Over 82 to 95 (LRIELNKWLKYSSH) the chain is Cytoplasmic. The chain crosses the membrane as a helical span at residues 96-116 (LLLISLLLLAAVLVVGKSVNG). Residues 117–122 (AARWLP) are Periplasmic-facing. A helical transmembrane segment spans residues 123–143 (LGIFNLQPAEVAKLSLFVFIA). The Cytoplasmic segment spans residues 144–155 (GYLVRRHGEVRD). The helical transmembrane segment at 156–176 (SFRGFVKPLLVLITLAFFLLM) threads the bilayer. Residues 177-178 (QP) lie on the Periplasmic side of the membrane. The helical transmembrane segment at 179–199 (DLGTTVVMFVTTIAMLFIAGA) threads the bilayer. Lys-200 is a topological domain (cytoplasmic). The helical transmembrane segment at 201-221 (LWQFIALVMGGISLVIVLILA) threads the bilayer. Topologically, residues 222–290 (EPYRMRRVTS…VFAVIAEELG (69 aa)) are periplasmic. The helical transmembrane segment at 291 to 311 (FVGVCLVLCLIFALVFKALLI) threads the bilayer. At 312–321 (GRKCLAHDQR) the chain is on the cytoplasmic side. The chain crosses the membrane as a helical span at residues 322–342 (FGGFLAFGIGIWFAFQTLVNV). Residues 343–356 (GAAAGIVPTKGLTL) lie on the Periplasmic side of the membrane. The chain crosses the membrane as a helical span at residues 357 to 377 (PLISYGGSSLIIMSVAVSLLI). The Cytoplasmic segment spans residues 378-400 (RIDHECRVYLANEPPRSENEEQK).

The protein belongs to the SEDS family. FtsW subfamily.

It localises to the cell inner membrane. It carries out the reaction [GlcNAc-(1-&gt;4)-Mur2Ac(oyl-L-Ala-gamma-D-Glu-L-Lys-D-Ala-D-Ala)](n)-di-trans,octa-cis-undecaprenyl diphosphate + beta-D-GlcNAc-(1-&gt;4)-Mur2Ac(oyl-L-Ala-gamma-D-Glu-L-Lys-D-Ala-D-Ala)-di-trans,octa-cis-undecaprenyl diphosphate = [GlcNAc-(1-&gt;4)-Mur2Ac(oyl-L-Ala-gamma-D-Glu-L-Lys-D-Ala-D-Ala)](n+1)-di-trans,octa-cis-undecaprenyl diphosphate + di-trans,octa-cis-undecaprenyl diphosphate + H(+). It participates in cell wall biogenesis; peptidoglycan biosynthesis. Peptidoglycan polymerase that is essential for cell division. This Aliivibrio salmonicida (strain LFI1238) (Vibrio salmonicida (strain LFI1238)) protein is Probable peptidoglycan glycosyltransferase FtsW.